A 734-amino-acid polypeptide reads, in one-letter code: NAD(P)H-quinone oxidoreductase subunit 5, chloroplastic (734 aa).

Helical transmembrane passes span 9 to 29 (WVIP…LFLV), 39 to 59 (IWAF…VHLS), 89 to 109 (IDPL…LVLI), 125 to 145 (FVYI…SNLI), 147 to 167 (IYFF…FWFT), 185 to 205 (GDFG…SLEF), 224 to 244 (LLTI…SAQF), 258 to 278 (TPIS…FLIA), 280 to 300 (LLPL…IGTL), 327 to 347 (LGYM…FHLI), 354 to 374 (ALLF…VGYS), 396 to 416 (TCFL…CFWS), 425 to 445 (WLYS…TAFY), 542 to 562 (LFPL…GIHF), 605 to 625 (SLAI…YSFF), and 714 to 734 (ISSY…FFLS).

This sequence belongs to the complex I subunit 5 family. NDH is composed of at least 16 different subunits, 5 of which are encoded in the nucleus.

It is found in the plastid. The protein resides in the chloroplast thylakoid membrane. It catalyses the reaction a plastoquinone + NADH + (n+1) H(+)(in) = a plastoquinol + NAD(+) + n H(+)(out). It carries out the reaction a plastoquinone + NADPH + (n+1) H(+)(in) = a plastoquinol + NADP(+) + n H(+)(out). In terms of biological role, NDH shuttles electrons from NAD(P)H:plastoquinone, via FMN and iron-sulfur (Fe-S) centers, to quinones in the photosynthetic chain and possibly in a chloroplast respiratory chain. The immediate electron acceptor for the enzyme in this species is believed to be plastoquinone. Couples the redox reaction to proton translocation, and thus conserves the redox energy in a proton gradient. The sequence is that of NAD(P)H-quinone oxidoreductase subunit 5, chloroplastic (ndhF) from Oryza nivara (Indian wild rice).